The sequence spans 108 residues: Thiosulfate sulfurtransferase GlpE (108 aa).

The 89-residue stretch at 18-106 (ENEGATLADI…WERSGLPIET (89 aa)) folds into the Rhodanese domain. Catalysis depends on Cys-66, which acts as the Cysteine persulfide intermediate.

Belongs to the GlpE family.

The protein localises to the cytoplasm. The enzyme catalyses thiosulfate + hydrogen cyanide = thiocyanate + sulfite + 2 H(+). It catalyses the reaction thiosulfate + [thioredoxin]-dithiol = [thioredoxin]-disulfide + hydrogen sulfide + sulfite + 2 H(+). Transferase that catalyzes the transfer of sulfur from thiosulfate to thiophilic acceptors such as cyanide or dithiols. May function in a CysM-independent thiosulfate assimilation pathway by catalyzing the conversion of thiosulfate to sulfite, which can then be used for L-cysteine biosynthesis. This chain is Thiosulfate sulfurtransferase GlpE, found in Actinobacillus pleuropneumoniae serotype 7 (strain AP76).